The primary structure comprises 418 residues: Protein SSXT (418 aa).

An N-acetylserine modification is found at Ser2. A transcriptional activation region spans residues 2–186 (SVAFAAPRQR…NQMTMSQGQP (185 aa)). The SH2-binding motif lies at 50–53 (YQQM). 2 disordered regions span residues 77-118 (APPT…PAPH) and 188-418 (GNYG…NYQQ). Over residues 225–251 (YQGQQPPMGMMGQVNQGNHMMGQRQIP) the composition is skewed to low complexity. Over residues 309-318 (GYDRPYEDSS) the composition is skewed to basic and acidic residues. Composition is skewed to low complexity over residues 328–337 (QYGQQQDAYQ), 345–366 (YPPQ…QGYG), and 376–393 (YPNY…YRPT). A run of 2 repeats spans residues 344-356 (GYPP…PGQQ) and 357-369 (GYPG…GPSQ). The tract at residues 344 to 369 (GYPPQQQQYPGQQGYPGQQQGYGPSQ) is 2 X 13 AA imperfect tandem repeats. Residues 374–377 (PQYP) carry the SH2-binding motif. The SH3-binding motif lies at 392-401 (PTQPGPPQPP). A compositionally biased stretch (pro residues) spans 394-403 (QPGPPQPPQQ). A compositionally biased stretch (low complexity) spans 404 to 418 (RPYGYDQGQYGNYQQ). Residues 413–416 (YGNY) carry the SH2-binding motif.

It belongs to the SS18 family. As to quaternary structure, interacts with MLLT10. Isoform 1 interacts with RBM14 isoform 1. Isoform 2 interacts with RBM14 isoform 1. Component of the multiprotein chromatin-remodeling complexes SWI/SNF: SWI/SNF-A (BAF), SWI/SNF-B (PBAF) and related complexes. The canonical complex contains a catalytic subunit (either SMARCA4/BRG1/BAF190A or SMARCA2/BRM/BAF190B) and at least SMARCE1, ACTL6A/BAF53, SMARCC1/BAF155, SMARCC2/BAF170, and SMARCB1/SNF5/BAF47. Other subunits specific to each of the complexes may also be present permitting several possible combinations developmentally and tissue specific. Component of the SWI/SNF (GBAF) subcomplex, which includes at least BICRA or BICRAL (mutually exclusive), BRD9, SS18, the core BAF subunits, SMARCA2/BRM, SMARCA4/BRG1/BAF190A, ACTL6A/BAF53, SMARCC1/BAF155, and SMARCD1/BAF60A. Fairly ubiquitously expressed. Expressed in synovial sarcomas and in other human cell lines. The fusion genes SSXT-SSX1 and SSXT-SSX2 are expressed only in synovial sarcomas.

The protein resides in the nucleus. Its function is as follows. Appears to function synergistically with RBM14 as a transcriptional coactivator. Isoform 1 and isoform 2 function in nuclear receptor coactivation. Isoform 1 and isoform 2 function in general transcriptional coactivation. Component of SWI/SNF chromatin remodeling subcomplex GBAF that carries out key enzymatic activities, changing chromatin structure by altering DNA-histone contacts within a nucleosome in an ATP-dependent manner. The polypeptide is Protein SSXT (SS18) (Homo sapiens (Human)).